The following is a 291-amino-acid chain: Elongation factor Ts (291 aa).

The involved in Mg(2+) ion dislocation from EF-Tu stretch occupies residues 80-83; the sequence is TDFV.

It belongs to the EF-Ts family.

The protein localises to the cytoplasm. Functionally, associates with the EF-Tu.GDP complex and induces the exchange of GDP to GTP. It remains bound to the aminoacyl-tRNA.EF-Tu.GTP complex up to the GTP hydrolysis stage on the ribosome. This Ligilactobacillus salivarius (strain UCC118) (Lactobacillus salivarius) protein is Elongation factor Ts.